A 221-amino-acid chain; its full sequence is Phosphatidylserine decarboxylase proenzyme (221 aa).

Catalysis depends on serine 189, which acts as the Schiff-base intermediate with substrate; via pyruvic acid. Serine 189 carries the post-translational modification Pyruvic acid (Ser); by autocatalysis.

It belongs to the phosphatidylserine decarboxylase family. PSD-A subfamily. As to quaternary structure, heterodimer of a large membrane-associated beta subunit and a small pyruvoyl-containing alpha subunit. Requires pyruvate as cofactor. Post-translationally, is synthesized initially as an inactive proenzyme. Formation of the active enzyme involves a self-maturation process in which the active site pyruvoyl group is generated from an internal serine residue via an autocatalytic post-translational modification. Two non-identical subunits are generated from the proenzyme in this reaction, and the pyruvate is formed at the N-terminus of the alpha chain, which is derived from the carboxyl end of the proenzyme. The post-translation cleavage follows an unusual pathway, termed non-hydrolytic serinolysis, in which the side chain hydroxyl group of the serine supplies its oxygen atom to form the C-terminus of the beta chain, while the remainder of the serine residue undergoes an oxidative deamination to produce ammonia and the pyruvoyl prosthetic group on the alpha chain.

It is found in the cell membrane. It carries out the reaction a 1,2-diacyl-sn-glycero-3-phospho-L-serine + H(+) = a 1,2-diacyl-sn-glycero-3-phosphoethanolamine + CO2. It participates in phospholipid metabolism; phosphatidylethanolamine biosynthesis; phosphatidylethanolamine from CDP-diacylglycerol: step 2/2. Its function is as follows. Catalyzes the formation of phosphatidylethanolamine (PtdEtn) from phosphatidylserine (PtdSer). In Porphyromonas gingivalis (strain ATCC 33277 / DSM 20709 / CIP 103683 / JCM 12257 / NCTC 11834 / 2561), this protein is Phosphatidylserine decarboxylase proenzyme.